Consider the following 220-residue polypeptide: Putative tyrosine-protein phosphatase 1 (220 aa).

The region spanning phenylalanine 67–glutamine 218 is the Tyrosine-protein phosphatase domain.

The protein belongs to the protein-tyrosine phosphatase family. Non-receptor class CDC14 subfamily.

It catalyses the reaction O-phospho-L-tyrosyl-[protein] + H2O = L-tyrosyl-[protein] + phosphate. Its function is as follows. Could be inactive as the active site cysteine is modified to tryptophan. The sequence is that of Putative tyrosine-protein phosphatase 1 (PTP-1) from Orgyia pseudotsugata multicapsid polyhedrosis virus (OpMNPV).